The primary structure comprises 322 residues: Cytochrome f (322 aa).

The signal sequence occupies residues 1 to 35; it reads MQTRNTFSWTWIREEITRSISVSLMIYIITWSSIS. Residues Y38, C58, C61, and H62 each coordinate heme. The chain crosses the membrane as a helical span at residues 288–308; sequence VQGLLFFLGSVVLAQIFLVLK.

It belongs to the cytochrome f family. As to quaternary structure, the 4 large subunits of the cytochrome b6-f complex are cytochrome b6, subunit IV (17 kDa polypeptide, petD), cytochrome f and the Rieske protein, while the 4 small subunits are PetG, PetL, PetM and PetN. The complex functions as a dimer. Heme is required as a cofactor.

Its subcellular location is the plastid. It is found in the chloroplast thylakoid membrane. In terms of biological role, component of the cytochrome b6-f complex, which mediates electron transfer between photosystem II (PSII) and photosystem I (PSI), cyclic electron flow around PSI, and state transitions. This chain is Cytochrome f, found in Aethionema grandiflorum (Persian stone-cress).